We begin with the raw amino-acid sequence, 739 residues long: Trehalose phosphorylase (739 aa).

Residues 1–26 constitute a propeptide that is removed on maturation; sequence MSTPHHQFESKSSTAIRRRLSSSVSS. The disordered stretch occupies residues 1-28; it reads MSTPHHQFESKSSTAIRRRLSSSVSSKQ.

The protein belongs to the glycosyltransferase group 1 family. Glycosyltransferase 4 subfamily. Homodimer.

It catalyses the reaction alpha,alpha-trehalose + phosphate = alpha-D-glucose + alpha-D-glucose 1-phosphate. Reversibly catalyzes the synthesis and degradation of trehalose from glucose and alpha-D-glucose 1-phosphate. The equilibrium lies in the direction of trehalose synthesis. The protein is Trehalose phosphorylase of Pleurotus pulmonarius (Indian oyster mushroom).